We begin with the raw amino-acid sequence, 403 residues long: S-adenosylmethionine synthase (403 aa).

Position 140–145 (glycine 140–aspartate 145) interacts with ATP.

The protein belongs to the AdoMet synthase 2 family. It depends on Mg(2+) as a cofactor.

It carries out the reaction L-methionine + ATP + H2O = S-adenosyl-L-methionine + phosphate + diphosphate. It participates in amino-acid biosynthesis; S-adenosyl-L-methionine biosynthesis; S-adenosyl-L-methionine from L-methionine: step 1/1. Its function is as follows. Catalyzes the formation of S-adenosylmethionine from methionine and ATP. This chain is S-adenosylmethionine synthase, found in Sulfolobus acidocaldarius (strain ATCC 33909 / DSM 639 / JCM 8929 / NBRC 15157 / NCIMB 11770).